Consider the following 488-residue polypeptide: Homoserine O-acetyltransferase (488 aa).

Residues 47–355 enclose the AB hydrolase-1 domain; sequence NAILVCHALT…SYGHDAFLLE (309 aa). The active-site Nucleophile is the Ser-153. Arg-222 provides a ligand contact to substrate. Active-site residues include Asp-316 and His-349. Asp-350 is a binding site for substrate. 2 CBS domains span residues 376-433 and 437-488; these read MTEK…CSKL and MTRD…RLIG.

This sequence belongs to the AB hydrolase superfamily. MetX family. In terms of assembly, homodimer.

The protein localises to the cytoplasm. It carries out the reaction L-homoserine + acetyl-CoA = O-acetyl-L-homoserine + CoA. It participates in amino-acid biosynthesis; L-methionine biosynthesis via de novo pathway; O-acetyl-L-homoserine from L-homoserine: step 1/1. In terms of biological role, transfers an acetyl group from acetyl-CoA to L-homoserine, forming acetyl-L-homoserine. This chain is Homoserine O-acetyltransferase, found in Methanococcoides burtonii (strain DSM 6242 / NBRC 107633 / OCM 468 / ACE-M).